The chain runs to 311 residues: Glycerol-3-phosphate dehydrogenase [NAD(P)+] (311 aa).

Positions 12, 31, 32, and 96 each coordinate NADPH. Sn-glycerol 3-phosphate contacts are provided by Lys-96, Gly-124, and Ser-126. Residue Ala-128 coordinates NADPH. Residues Lys-178, Asp-231, Ser-241, Arg-242, and Asn-243 each coordinate sn-glycerol 3-phosphate. Lys-178 (proton acceptor) is an active-site residue. Arg-242 is an NADPH binding site. The NADPH site is built by Val-266 and Glu-268.

The protein belongs to the NAD-dependent glycerol-3-phosphate dehydrogenase family.

It is found in the cytoplasm. It carries out the reaction sn-glycerol 3-phosphate + NAD(+) = dihydroxyacetone phosphate + NADH + H(+). It catalyses the reaction sn-glycerol 3-phosphate + NADP(+) = dihydroxyacetone phosphate + NADPH + H(+). The protein operates within membrane lipid metabolism; glycerophospholipid metabolism. Its function is as follows. Catalyzes the reduction of the glycolytic intermediate dihydroxyacetone phosphate (DHAP) to sn-glycerol 3-phosphate (G3P), the key precursor for phospholipid synthesis. In Helicobacter hepaticus (strain ATCC 51449 / 3B1), this protein is Glycerol-3-phosphate dehydrogenase [NAD(P)+].